The chain runs to 364 residues: UDP-N-acetylglucosamine--N-acetylmuramyl-(pentapeptide) pyrophosphoryl-undecaprenol N-acetylglucosamine transferase (364 aa).

UDP-N-acetyl-alpha-D-glucosamine is bound by residues 10–12 (TGG), Asn124, Arg166, Ser196, and Gln297.

This sequence belongs to the glycosyltransferase 28 family. MurG subfamily.

It is found in the cell membrane. The enzyme catalyses di-trans,octa-cis-undecaprenyl diphospho-N-acetyl-alpha-D-muramoyl-L-alanyl-D-glutamyl-meso-2,6-diaminopimeloyl-D-alanyl-D-alanine + UDP-N-acetyl-alpha-D-glucosamine = di-trans,octa-cis-undecaprenyl diphospho-[N-acetyl-alpha-D-glucosaminyl-(1-&gt;4)]-N-acetyl-alpha-D-muramoyl-L-alanyl-D-glutamyl-meso-2,6-diaminopimeloyl-D-alanyl-D-alanine + UDP + H(+). The protein operates within cell wall biogenesis; peptidoglycan biosynthesis. In terms of biological role, cell wall formation. Catalyzes the transfer of a GlcNAc subunit on undecaprenyl-pyrophosphoryl-MurNAc-pentapeptide (lipid intermediate I) to form undecaprenyl-pyrophosphoryl-MurNAc-(pentapeptide)GlcNAc (lipid intermediate II). The sequence is that of UDP-N-acetylglucosamine--N-acetylmuramyl-(pentapeptide) pyrophosphoryl-undecaprenol N-acetylglucosamine transferase from Caldanaerobacter subterraneus subsp. tengcongensis (strain DSM 15242 / JCM 11007 / NBRC 100824 / MB4) (Thermoanaerobacter tengcongensis).